Reading from the N-terminus, the 545-residue chain is Chaperonin GroEL (545 aa).

ATP is bound by residues 30–33 (TLGP), K51, 87–91 (DGTTT), G415, 479–481 (NAA), and D495.

It belongs to the chaperonin (HSP60) family. In terms of assembly, forms a cylinder of 14 subunits composed of two heptameric rings stacked back-to-back. Interacts with the co-chaperonin GroES.

It is found in the cytoplasm. It carries out the reaction ATP + H2O + a folded polypeptide = ADP + phosphate + an unfolded polypeptide.. In terms of biological role, together with its co-chaperonin GroES, plays an essential role in assisting protein folding. The GroEL-GroES system forms a nano-cage that allows encapsulation of the non-native substrate proteins and provides a physical environment optimized to promote and accelerate protein folding. The sequence is that of Chaperonin GroEL from Tolumonas auensis (strain DSM 9187 / NBRC 110442 / TA 4).